The following is a 350-amino-acid chain: Protein MGF 360-12L (350 aa).

The ANK repeat unit spans residues 57-89 (DLNTALVKAVRENNYNLIKLFAEWGANINYGLV).

It belongs to the asfivirus MGF 360 family.

Plays a role in virus cell tropism, and may be required for efficient virus replication in macrophages. The chain is Protein MGF 360-12L from African swine fever virus (isolate Warthog/Namibia/Wart80/1980) (ASFV).